A 477-amino-acid chain; its full sequence is Serine/threonine-protein kinase pakC (477 aa).

A PH domain is found at 13 to 108 (SPDKEGELKK…WMKAVEKGSE (96 aa)). The 14-residue stretch at 112-125 (VSQPFNLKHEVHVD) folds into the CRIB domain. The region spanning 204 to 458 (YKNMTKIGEG…ATDLLKHPFM (255 aa)) is the Protein kinase domain. Residues 210 to 218 (IGEGAAGEV) and Lys-233 each bind ATP. Asp-326 functions as the Proton acceptor in the catalytic mechanism.

It belongs to the protein kinase superfamily. STE Ser/Thr protein kinase family. STE20 subfamily. As to quaternary structure, interacts with GTP-bound racB. Mg(2+) serves as cofactor.

The protein resides in the cytoplasm. The protein localises to the membrane. The enzyme catalyses L-seryl-[protein] + ATP = O-phospho-L-seryl-[protein] + ADP + H(+). It catalyses the reaction L-threonyl-[protein] + ATP = O-phospho-L-threonyl-[protein] + ADP + H(+). Its activity is regulated as follows. Kinase activity is rapidly and transiently increased in response to chemoattractant stimulation. In terms of biological role, has role in the regulation of chemotaxis. This is Serine/threonine-protein kinase pakC (pakC) from Dictyostelium discoideum (Social amoeba).